The sequence spans 139 residues: MEVPAAWKKFRYRGKTLEELLEMPLDDFIELLPARQRRSLKRGFNDAQRRLLEKVLKARKEMEKGKKVKIRTHVRDMVILPIMVGLTIEVYNGKEFVPVKIVPEMIGHYLGEFSHTTAVVKHGEPGLKATRSSLFVAAK.

This sequence belongs to the universal ribosomal protein uS19 family.

Protein S19 forms a complex with S13 that binds strongly to the 16S ribosomal RNA. This Ignicoccus hospitalis (strain KIN4/I / DSM 18386 / JCM 14125) protein is Small ribosomal subunit protein uS19.